Reading from the N-terminus, the 140-residue chain is Large ribosomal subunit protein uL14 (140 aa).

The protein belongs to the universal ribosomal protein uL14 family.

This Drosophila melanogaster (Fruit fly) protein is Large ribosomal subunit protein uL14 (RpL23).